The chain runs to 365 residues: Cytoplasmic tRNA 2-thiolation protein 1 (365 aa).

The protein belongs to the TtcA family. CTU1/NCS6/ATPBD3 subfamily.

Its subcellular location is the cytoplasm. It functions in the pathway tRNA modification; 5-methoxycarbonylmethyl-2-thiouridine-tRNA biosynthesis. Its function is as follows. Plays a central role in 2-thiolation of mcm(5)S(2)U at tRNA wobble positions of tRNA(Lys), tRNA(Glu) and tRNA(Gln). Directly binds tRNAs and probably acts by catalyzing adenylation of tRNAs, an intermediate required for 2-thiolation. It is unclear whether it acts as a sulfurtransferase that transfers sulfur from thiocarboxylated URM1 onto the uridine of tRNAs at wobble position. Prior mcm(5) tRNA modification by the elongator complex is required for 2-thiolation. May also be involved in protein urmylation. This is Cytoplasmic tRNA 2-thiolation protein 1 from Yarrowia lipolytica (strain CLIB 122 / E 150) (Yeast).